Here is a 401-residue protein sequence, read N- to C-terminus: Chorismate synthase (401 aa).

Positions 40 and 46 each coordinate NADP(+). FMN is bound by residues 135-137, 256-257, Gly300, 315-319, and Arg341; these read RAS, QA, and KPIST.

This sequence belongs to the chorismate synthase family. As to quaternary structure, homotetramer. Requires FMNH2 as cofactor.

It catalyses the reaction 5-O-(1-carboxyvinyl)-3-phosphoshikimate = chorismate + phosphate. Its pathway is metabolic intermediate biosynthesis; chorismate biosynthesis; chorismate from D-erythrose 4-phosphate and phosphoenolpyruvate: step 7/7. Its function is as follows. Catalyzes the anti-1,4-elimination of the C-3 phosphate and the C-6 proR hydrogen from 5-enolpyruvylshikimate-3-phosphate (EPSP) to yield chorismate, which is the branch point compound that serves as the starting substrate for the three terminal pathways of aromatic amino acid biosynthesis. This reaction introduces a second double bond into the aromatic ring system. In Mycobacterium bovis (strain BCG / Pasteur 1173P2), this protein is Chorismate synthase.